The sequence spans 205 residues: ATP phosphoribosyltransferase (205 aa).

This sequence belongs to the ATP phosphoribosyltransferase family. Short subfamily.

It is found in the cytoplasm. It catalyses the reaction 1-(5-phospho-beta-D-ribosyl)-ATP + diphosphate = 5-phospho-alpha-D-ribose 1-diphosphate + ATP. The protein operates within amino-acid biosynthesis; L-histidine biosynthesis; L-histidine from 5-phospho-alpha-D-ribose 1-diphosphate: step 1/9. Its function is as follows. Catalyzes the condensation of ATP and 5-phosphoribose 1-diphosphate to form N'-(5'-phosphoribosyl)-ATP (PR-ATP). Has a crucial role in the pathway because the rate of histidine biosynthesis seems to be controlled primarily by regulation of HisG enzymatic activity. The protein is ATP phosphoribosyltransferase of Thermococcus gammatolerans (strain DSM 15229 / JCM 11827 / EJ3).